Reading from the N-terminus, the 333-residue chain is Ketol-acid reductoisomerase (NADP(+)) (333 aa).

A KARI N-terminal Rossmann domain is found at 1–179; that stretch reads MFYDDDADLT…GGTRAGVIKT (179 aa). Residues 22–25, K45, S48, S50, and 80–83 each bind NADP(+); these read YGSQ and DTAQ. The active site involves H105. G131 contributes to the NADP(+) binding site. The KARI C-terminal knotted domain maps to 180–325; that stretch reads TFKDETETDL…KRLRDLMSWV (146 aa). Mg(2+) contacts are provided by D188, E192, E224, and E228. Residue S249 participates in substrate binding.

The protein belongs to the ketol-acid reductoisomerase family. It depends on Mg(2+) as a cofactor.

The enzyme catalyses (2R)-2,3-dihydroxy-3-methylbutanoate + NADP(+) = (2S)-2-acetolactate + NADPH + H(+). It carries out the reaction (2R,3R)-2,3-dihydroxy-3-methylpentanoate + NADP(+) = (S)-2-ethyl-2-hydroxy-3-oxobutanoate + NADPH + H(+). It participates in amino-acid biosynthesis; L-isoleucine biosynthesis; L-isoleucine from 2-oxobutanoate: step 2/4. Its pathway is amino-acid biosynthesis; L-valine biosynthesis; L-valine from pyruvate: step 2/4. Functionally, involved in the biosynthesis of branched-chain amino acids (BCAA). Catalyzes an alkyl-migration followed by a ketol-acid reduction of (S)-2-acetolactate (S2AL) to yield (R)-2,3-dihydroxy-isovalerate. In the isomerase reaction, S2AL is rearranged via a Mg-dependent methyl migration to produce 3-hydroxy-3-methyl-2-ketobutyrate (HMKB). In the reductase reaction, this 2-ketoacid undergoes a metal-dependent reduction by NADPH to yield (R)-2,3-dihydroxy-isovalerate. In Mycobacterium avium (strain 104), this protein is Ketol-acid reductoisomerase (NADP(+)).